We begin with the raw amino-acid sequence, 335 residues long: Aliphatic sulfonates import ATP-binding protein SsuB (335 aa).

One can recognise an ABC transporter domain in the interval 74–293 (VRLTRVSKRY…ARASAAFAAL (220 aa)). 106 to 113 (GRSGCGKS) serves as a coordination point for ATP. The tract at residues 308 to 335 (APAAPNAAGPEGASRGRAAPASGLRWAV) is disordered.

This sequence belongs to the ABC transporter superfamily. Aliphatic sulfonates importer (TC 3.A.1.17.2) family. As to quaternary structure, the complex is composed of two ATP-binding proteins (SsuB), two transmembrane proteins (SsuC) and a solute-binding protein (SsuA).

Its subcellular location is the cell inner membrane. The enzyme catalyses ATP + H2O + aliphatic sulfonate-[sulfonate-binding protein]Side 1 = ADP + phosphate + aliphatic sulfonateSide 2 + [sulfonate-binding protein]Side 1.. Part of the ABC transporter complex SsuABC involved in aliphatic sulfonates import. Responsible for energy coupling to the transport system. This is Aliphatic sulfonates import ATP-binding protein SsuB from Burkholderia mallei (strain ATCC 23344).